Consider the following 395-residue polypeptide: Acetate kinase (395 aa).

Asn-8 provides a ligand contact to Mg(2+). Residue Lys-15 coordinates ATP. Position 89 (Arg-89) interacts with substrate. The active-site Proton donor/acceptor is the Asp-146. ATP is bound by residues 206–210, 281–283, and 329–333; these read HLGNG, DLR, and GIGEN. Residue Glu-382 coordinates Mg(2+).

It belongs to the acetokinase family. Homodimer. The cofactor is Mg(2+). Requires Mn(2+) as cofactor.

It localises to the cytoplasm. The catalysed reaction is acetate + ATP = acetyl phosphate + ADP. Its pathway is metabolic intermediate biosynthesis; acetyl-CoA biosynthesis; acetyl-CoA from acetate: step 1/2. With respect to regulation, induced by glucose excess, the induction may be mediated by CcpA transcriptional regulator. In terms of biological role, catalyzes the formation of acetyl phosphate from acetate and ATP. Can also catalyze the reverse reaction. Appears to favor the formation of acetate. Involved in the secretion of excess carbohydrate. The polypeptide is Acetate kinase (Bacillus subtilis (strain 168)).